We begin with the raw amino-acid sequence, 513 residues long: ATP synthase subunit alpha (513 aa).

Residue 169-176 (GDRQIGKT) participates in ATP binding.

It belongs to the ATPase alpha/beta chains family. In terms of assembly, F-type ATPases have 2 components, CF(1) - the catalytic core - and CF(0) - the membrane proton channel. CF(1) has five subunits: alpha(3), beta(3), gamma(1), delta(1), epsilon(1). CF(0) has three main subunits: a(1), b(2) and c(9-12). The alpha and beta chains form an alternating ring which encloses part of the gamma chain. CF(1) is attached to CF(0) by a central stalk formed by the gamma and epsilon chains, while a peripheral stalk is formed by the delta and b chains.

It localises to the cell inner membrane. The enzyme catalyses ATP + H2O + 4 H(+)(in) = ADP + phosphate + 5 H(+)(out). Functionally, produces ATP from ADP in the presence of a proton gradient across the membrane. The alpha chain is a regulatory subunit. This Francisella philomiragia subsp. philomiragia (strain ATCC 25017 / CCUG 19701 / FSC 153 / O#319-036) protein is ATP synthase subunit alpha.